The primary structure comprises 968 residues: RNA polymerase-associated protein RapA (968 aa).

The Helicase ATP-binding domain occupies 164-334 (DVGRRHAPRV…FARLRLLDPN (171 aa)). 177-184 (DEVGLGKT) lines the ATP pocket. Residues 280–283 (DEAH) carry the DEAH box motif. Residues 490-644 (RVEWLMGYLT…TCPTGRTVYD (155 aa)) form the Helicase C-terminal domain.

Belongs to the SNF2/RAD54 helicase family. RapA subfamily. As to quaternary structure, interacts with the RNAP. Has a higher affinity for the core RNAP than for the holoenzyme. Its ATPase activity is stimulated by binding to RNAP.

Its function is as follows. Transcription regulator that activates transcription by stimulating RNA polymerase (RNAP) recycling in case of stress conditions such as supercoiled DNA or high salt concentrations. Probably acts by releasing the RNAP, when it is trapped or immobilized on tightly supercoiled DNA. Does not activate transcription on linear DNA. Probably not involved in DNA repair. This chain is RNA polymerase-associated protein RapA, found in Klebsiella pneumoniae (strain 342).